A 278-amino-acid polypeptide reads, in one-letter code: Probable 3-hydroxybutyryl-CoA dehydrogenase (278 aa).

Belongs to the 3-hydroxyacyl-CoA dehydrogenase family.

It carries out the reaction (3S)-3-hydroxybutanoyl-CoA + NADP(+) = acetoacetyl-CoA + NADPH + H(+). It functions in the pathway lipid metabolism; butanoate metabolism. In Deinococcus radiodurans (strain ATCC 13939 / DSM 20539 / JCM 16871 / CCUG 27074 / LMG 4051 / NBRC 15346 / NCIMB 9279 / VKM B-1422 / R1), this protein is Probable 3-hydroxybutyryl-CoA dehydrogenase (hbd).